Consider the following 1562-residue polypeptide: NAC-alpha domain-containing protein 1 (1562 aa).

The span at 1–13 shows a compositional bias: low complexity; that stretch reads MPGEAARAELLLP. Disordered regions lie at residues 1-24, 56-110, 131-226, 249-288, 327-365, 381-458, 503-941, and 953-1423; these read MPGE…RTDL, FLPS…TEAP, SPRA…ADGD, SGWG…SSSW, TPLS…LQSL, RDDT…GAYL, TPQA…EPLA, and GCAP…AMSK. Basic and acidic residues predominate over residues 195–208; sequence GDARDSEAELRDEL. Residues 275–287 are compositionally biased toward low complexity; the sequence is SSESSLSADSSSS. The segment covering 331–340 has biased composition (acidic residues); it reads PEEEEEEAVA. Positions 385–397 are enriched in low complexity; the sequence is SAASSDSDSASYA. 2 stretches are compositionally biased toward polar residues: residues 449–458 and 550–564; these read PQTSDRGAYL and QEET…SPQN. The span at 992 to 1007 shows a compositional bias: low complexity; it reads PAALDQVQQDDPQPAA. The segment covering 1048 to 1074 has biased composition (basic and acidic residues); the sequence is PGREACLEARAHTGDGAKPDSPQKETL. Phosphoserine is present on Ser1068. Low complexity-rich tracts occupy residues 1172-1182 and 1231-1241; these read APTSAPTSQQP and APGTLAGAALP. Acidic residues predominate over residues 1254–1264; the sequence is PQEDSVEDEEP. 3 stretches are compositionally biased toward low complexity: residues 1265 to 1284, 1298 to 1308, and 1335 to 1344; these read PGSL…AAAV, SLSPHSPLLSP, and QSPAGPQGLS. Over residues 1348–1357 the composition is skewed to acidic residues; it reads QQEDEDSLEE. Position 1354 is a phosphoserine (Ser1354). One can recognise an NAC-A/B domain in the interval 1411-1476; that stretch reads SRSEKKARKA…AKIEDLSQQV (66 aa).

This sequence belongs to the NAC-alpha family.

Its subcellular location is the cytoplasm. It localises to the nucleus. Functionally, may prevent inappropriate targeting of non-secretory polypeptides to the endoplasmic reticulum (ER). May bind to nascent polypeptide chains as they emerge from the ribosome and block their interaction with the signal recognition particle (SRP), which normally targets nascent secretory peptides to the ER. May also reduce the inherent affinity of ribosomes for protein translocation sites in the ER membrane (M sites). This is NAC-alpha domain-containing protein 1 (NACAD) from Homo sapiens (Human).